The chain runs to 522 residues: Maturase K (522 aa).

Belongs to the intron maturase 2 family. MatK subfamily.

The protein resides in the plastid. It is found in the chloroplast. In terms of biological role, usually encoded in the trnK tRNA gene intron. Probably assists in splicing its own and other chloroplast group II introns. In Tigridia pavonia (Mexican shell flower), this protein is Maturase K.